A 684-amino-acid chain; its full sequence is Pre-mRNA-splicing factor CLF1 (684 aa).

HAT repeat units follow at residues 43–75 (DWQR…FEFD), 77–109 (KDIR…SEIK), 111–143 (KNIN…LEES), 145–176 (GNQG…FETR), 178–209 (LNFE…FEQT), 211–251 (GDIS…WEAS), 253–285 (GEYE…FEKK), 295–327 (IVIA…LVEE), 332–364 (QLTS…ICVR), 374–410 (NDLP…FEIR), 412–443 (NNLL…LEIR), 445–477 (KEFD…LEEN), 518–550 (AEYE…FEST), and 584–622 (ENKH…YEKV).

The protein belongs to the crooked-neck family. In terms of assembly, associated with the spliceosome.

Its subcellular location is the nucleus. In terms of biological role, involved in pre-mRNA splicing and cell cycle progression. Required for the spliceosome assembly and initiation of the DNA replication. The protein is Pre-mRNA-splicing factor CLF1 (CLF1) of Kluyveromyces lactis (strain ATCC 8585 / CBS 2359 / DSM 70799 / NBRC 1267 / NRRL Y-1140 / WM37) (Yeast).